A 94-amino-acid polypeptide reads, in one-letter code: Co-chaperonin GroES (94 aa).

It belongs to the GroES chaperonin family. Heptamer of 7 subunits arranged in a ring. Interacts with the chaperonin GroEL.

Its subcellular location is the cytoplasm. Together with the chaperonin GroEL, plays an essential role in assisting protein folding. The GroEL-GroES system forms a nano-cage that allows encapsulation of the non-native substrate proteins and provides a physical environment optimized to promote and accelerate protein folding. GroES binds to the apical surface of the GroEL ring, thereby capping the opening of the GroEL channel. The chain is Co-chaperonin GroES from Exiguobacterium sp. (strain ATCC BAA-1283 / AT1b).